The chain runs to 154 residues: Low molecular weight protein-tyrosine-phosphatase PtpA (154 aa).

Cys-8 (nucleophile) is an active-site residue. The active site involves Arg-14. The Proton donor role is filled by Asp-120.

Belongs to the low molecular weight phosphotyrosine protein phosphatase family.

The enzyme catalyses O-phospho-L-tyrosyl-[protein] + H2O = L-tyrosyl-[protein] + phosphate. In terms of biological role, dephosphorylates the phosphotyrosine-containing proteins. The protein is Low molecular weight protein-tyrosine-phosphatase PtpA (ptpA) of Staphylococcus epidermidis (strain ATCC 35984 / DSM 28319 / BCRC 17069 / CCUG 31568 / BM 3577 / RP62A).